Consider the following 68-residue polypeptide: Negative regulator of P-body association (68 aa).

The segment at 1–68 (MGDQPCASGR…LKSHPPPPEK (68 aa)) is disordered.

In terms of assembly, interacts with mRNA decapping proteins DCP1A, DCP2 and EDC4.

It localises to the cytoplasm. Its subcellular location is the P-body. Its function is as follows. Promotes dispersal of P-body components and is likely to play a role in the mRNA decapping process. The protein is Negative regulator of P-body association of Homo sapiens (Human).